The chain runs to 426 residues: Trophoblast glycoprotein (426 aa).

A signal peptide spans 1–31 (MPGAGSRGPSAGDGRLRLARLALVLLGWVSA). Residues 32–361 (SAPSSSVPSS…AVLPQSLQTS (330 aa)) are Extracellular-facing. Residues 33–47 (APSSSVPSSSTSPAA) show a composition bias toward low complexity. The disordered stretch occupies residues 33–53 (APSSSVPSSSTSPAAFLASGS). The LRRNT domain maps to 53–91 (SAQPPPAERCPAACECSEAARTVKCVNRNLLEVPADLPP). Intrachain disulfides connect Cys-62–Cys-68 and Cys-66–Cys-77. LRR repeat units follow at residues 92-113 (YVRN…AFAR), 116-139 (PLAD…GAFE), 141-163 (LPGL…FAFA), 172-210 (PSPL…AALR), 215-238 (LRGL…LLAQ), 239-261 (LPSL…ASFR), and 262-281 (NLTH…VLHN). Residue Asn-124 is glycosylated (N-linked (GlcNAc...) asparagine). An N-linked (GlcNAc...) asparagine glycan is attached at Asn-281. The LRRCT domain maps to 289-352 (GLAHVKVFLD…LNSSDLDCDA (64 aa)). 2 disulfide bridges follow: Cys-304/Cys-329 and Cys-306/Cys-350. The chain crosses the membrane as a helical span at residues 362-382 (YVFLGIVLALIGAIFLLVLYL). The Cytoplasmic segment spans residues 383–426 (NRKGIKKWMHNIRDACRDHMEGYHYRYEINADPRLTNLSSNSDV). Position 424 is a phosphoserine (Ser-424).

Post-translationally, highly glycosylated. As to expression, highly expressed in embryo and placenta. In adult, expressed only in brain and ovary. Not detected in kidney small intestine, heart, spleen, testis, liver, lung, thymus and stomach.

It is found in the cell membrane. Its function is as follows. May function as an inhibitor of Wnt/beta-catenin signaling by indirectly interacting with LRP6 and blocking Wnt3a-dependent LRP6 internalization. This chain is Trophoblast glycoprotein (Tpbg), found in Mus musculus (Mouse).